The following is a 366-amino-acid chain: Chorismate synthase (366 aa).

NADP(+)-binding residues include arginine 48 and arginine 54. FMN is bound by residues arginine 129–serine 131, asparagine 241–alanine 242, glycine 290, lysine 305–serine 309, and arginine 331.

It belongs to the chorismate synthase family. Homotetramer. FMNH2 serves as cofactor.

The enzyme catalyses 5-O-(1-carboxyvinyl)-3-phosphoshikimate = chorismate + phosphate. It functions in the pathway metabolic intermediate biosynthesis; chorismate biosynthesis; chorismate from D-erythrose 4-phosphate and phosphoenolpyruvate: step 7/7. Catalyzes the anti-1,4-elimination of the C-3 phosphate and the C-6 proR hydrogen from 5-enolpyruvylshikimate-3-phosphate (EPSP) to yield chorismate, which is the branch point compound that serves as the starting substrate for the three terminal pathways of aromatic amino acid biosynthesis. This reaction introduces a second double bond into the aromatic ring system. In Nitrobacter hamburgensis (strain DSM 10229 / NCIMB 13809 / X14), this protein is Chorismate synthase.